The chain runs to 553 residues: Keratin, type II cytoskeletal 6A (553 aa).

Polar residues predominate over residues methionine 1–serine 20. The disordered stretch occupies residues methionine 1 to alanine 21. The tract at residues methionine 1–glutamate 151 is head. The segment at glutamate 152 to leucine 187 is coil 1A. An IF rod domain is found at glutamate 152–leucine 465. The segment at glutamine 188–tyrosine 206 is linker 1. Residues isoleucine 207–methionine 298 are coil 1B. The linker 12 stretch occupies residues glutamine 299–isoleucine 322. The coil 2 stretch occupies residues isoleucine 323–glutamate 461. The tail stretch occupies residues glutamate 462–glutamine 553. The tract at residues leucine 528 to glutamine 553 is disordered. The segment covering serine 531–glutamine 553 has biased composition (low complexity).

It belongs to the intermediate filament family. As to quaternary structure, heterodimer of a type I and a type II keratin. KRT6 isomers associate with KRT16 and/or KRT17. Interacts with TCHP. As to expression, predominates in the adult trunk skin, tongue, trachea/esophagus and eye. In adult skin, localization is restricted to hair follicles, where it is localized predominantly in the outer root sheath.

In terms of biological role, epidermis-specific type I keratin involved in wound healing. Involved in the activation of follicular keratinocytes after wounding, while it does not play a major role in keratinocyte proliferation or migration. Participates in the regulation of epithelial migration by inhibiting the activity of SRC during wound repair. The protein is Keratin, type II cytoskeletal 6A (Krt6a) of Mus musculus (Mouse).